Consider the following 343-residue polypeptide: Phosphate acyltransferase (343 aa).

The protein belongs to the PlsX family. Homodimer. Probably interacts with PlsY.

Its subcellular location is the cytoplasm. The catalysed reaction is a fatty acyl-[ACP] + phosphate = an acyl phosphate + holo-[ACP]. Its pathway is lipid metabolism; phospholipid metabolism. Its function is as follows. Catalyzes the reversible formation of acyl-phosphate (acyl-PO(4)) from acyl-[acyl-carrier-protein] (acyl-ACP). This enzyme utilizes acyl-ACP as fatty acyl donor, but not acyl-CoA. The sequence is that of Phosphate acyltransferase from Coxiella burnetii (strain RSA 331 / Henzerling II).